The chain runs to 339 residues: 3-isopropylmalate dehydrogenase (339 aa).

4 residues coordinate substrate: arginine 88, arginine 98, arginine 122, and aspartate 212. Mg(2+) is bound by residues aspartate 212, aspartate 236, and aspartate 240. An NAD(+)-binding site is contributed by 272-284; the sequence is GSAPDIAGQGIAD.

This sequence belongs to the isocitrate and isopropylmalate dehydrogenases family. LeuB type 2 subfamily. As to quaternary structure, homodimer. It depends on Mg(2+) as a cofactor. Requires Mn(2+) as cofactor.

It localises to the cytoplasm. It carries out the reaction (2R,3S)-3-isopropylmalate + NAD(+) = 4-methyl-2-oxopentanoate + CO2 + NADH. Its pathway is amino-acid biosynthesis; L-leucine biosynthesis; L-leucine from 3-methyl-2-oxobutanoate: step 3/4. Its function is as follows. Catalyzes the oxidation of 3-carboxy-2-hydroxy-4-methylpentanoate (3-isopropylmalate) to 3-carboxy-4-methyl-2-oxopentanoate. The product decarboxylates to 4-methyl-2 oxopentanoate. This is 3-isopropylmalate dehydrogenase from Corynebacterium diphtheriae (strain ATCC 700971 / NCTC 13129 / Biotype gravis).